A 129-amino-acid chain; its full sequence is Small ribosomal subunit protein uS13 (129 aa).

Residues 95-114 (NLPVRGQRTKTNARTRRGPR) show a composition bias toward basic residues. Residues 95–129 (NLPVRGQRTKTNARTRRGPRKTVAGRGQKRGATKK) are disordered.

It belongs to the universal ribosomal protein uS13 family. In terms of assembly, part of the 30S ribosomal subunit. Forms a loose heterodimer with protein S19. Forms two bridges to the 50S subunit in the 70S ribosome.

In terms of biological role, located at the top of the head of the 30S subunit, it contacts several helices of the 16S rRNA. In the 70S ribosome it contacts the 23S rRNA (bridge B1a) and protein L5 of the 50S subunit (bridge B1b), connecting the 2 subunits; these bridges are implicated in subunit movement. Contacts the tRNAs in the A and P-sites. The polypeptide is Small ribosomal subunit protein uS13 (Dehalococcoides mccartyi (strain ATCC BAA-2100 / JCM 16839 / KCTC 5957 / BAV1)).